The chain runs to 364 residues: O-methyltransferase 1 (364 aa).

5 residues coordinate S-adenosyl-L-homocysteine: serine 183, glycine 207, aspartate 230, aspartate 250, and lysine 264. Aspartate 230 lines the S-adenosyl-L-methionine pocket. Histidine 268 acts as the Proton acceptor in catalysis.

The protein belongs to the class I-like SAM-binding methyltransferase superfamily. Cation-independent O-methyltransferase family. As to quaternary structure, homodimer.

It catalyses the reaction dopamine + S-adenosyl-L-methionine = 3-methoxytyramine + S-adenosyl-L-homocysteine + H(+). The enzyme catalyses 3,4-dihydroxy-5-methoxyphenethylamine + S-adenosyl-L-methionine = 4-hydroxy-3,5-dimethoxyphenethylamine + S-adenosyl-L-homocysteine + H(+). Its pathway is aromatic compound metabolism. The protein operates within alkaloid biosynthesis. In terms of biological role, O-methyltransferase participating in the biosynthesis of natural products derived from phenylethylamine, including mescaline, a natural hallucinogen potentially used in psychotherapeutic treatments. Catalyzes the O-methylation of mescaline meta hydroxyl groups, using dopamine and 3,4-dihydroxy-5-methoxyphenethylamine as substrates. This Lophophora williamsii (Peyote) protein is O-methyltransferase 1.